The following is a 252-amino-acid chain: PF03932 family protein CutC (252 aa).

It belongs to the CutC family.

It is found in the cytoplasm. In Sodalis glossinidius (strain morsitans), this protein is PF03932 family protein CutC.